The sequence spans 299 residues: Protease HtpX homolog (299 aa).

Transmembrane regions (helical) follow at residues 15–35 (ILLL…GYLF) and 39–59 (GLGG…SMIF). Residue His143 participates in Zn(2+) binding. Glu144 is an active-site residue. Residue His147 coordinates Zn(2+). A run of 2 helical transmembrane segments spans residues 158 to 178 (IAVA…RMMW) and 198 to 218 (IIML…ATLV). Residue Glu227 coordinates Zn(2+).

It belongs to the peptidase M48B family. Requires Zn(2+) as cofactor.

It is found in the cell membrane. The protein is Protease HtpX homolog of Streptococcus pneumoniae serotype 4 (strain ATCC BAA-334 / TIGR4).